Reading from the N-terminus, the 474-residue chain is Proline--tRNA ligase (474 aa).

The protein belongs to the class-II aminoacyl-tRNA synthetase family. ProS type 3 subfamily. In terms of assembly, homodimer.

It localises to the cytoplasm. The catalysed reaction is tRNA(Pro) + L-proline + ATP = L-prolyl-tRNA(Pro) + AMP + diphosphate. In terms of biological role, catalyzes the attachment of proline to tRNA(Pro) in a two-step reaction: proline is first activated by ATP to form Pro-AMP and then transferred to the acceptor end of tRNA(Pro). This Onion yellows phytoplasma (strain OY-M) protein is Proline--tRNA ligase.